A 539-amino-acid polypeptide reads, in one-letter code: MADTKYIFVTGGVVSSLGKGIVAASLGKLLQARGFNVALQKFDPYINIDPGTLNPYEHGECYVTEDGHEADLDLGHYERFLNTPTTRANNITTGRIYQNVIRKERKGEYLGKTVQVVPHITDEIKRNVKLLGQKSQYDFVITEIGGTVGDIESLPFLESVRQLKWELGQNCLCVHLTYVPYIAAAGEVKTKPTQHSVKQLQEVGIQPDILVLRTEHELQPDILKKVALFCNVAPDSVVQSVDVPTIYEVPLVLQQQHMDETVLRKVGLQVGPVPEMRQWHEFLEMKHTARETVTIALVGKYVELQDAYKSIDESLMQAAIYNRKKLNLISVHSEKVTEANVAETLKDMDGIVIAPGFGSRGVEGKLIALKYARENDLPTLGICLGMQCMVIEYARNVLGFKDANTTEIESNIEHKVIDLMDEQKTVTDMGGSMRLGAYDCALRKGSKLAAAYGKEFVRERHRHRFEFNSQYREAFEKAGMQCVGENPETGLVEAVEVPACRWFVGVQFHPEYNSTVVNPNPLFMAFIREAIKTRKKDKE.

The interval 1–268 (MADTKYIFVT…DETVLRKVGL (268 aa)) is amidoligase domain. Position 15 (serine 15) interacts with CTP. UTP is bound at residue serine 15. 16–21 (SLGKGI) provides a ligand contact to ATP. Tyrosine 56 provides a ligand contact to L-glutamine. ATP is bound at residue aspartate 73. Residues aspartate 73 and glutamate 143 each coordinate Mg(2+). CTP-binding positions include 150 to 152 (DIE), 189 to 194 (KTKPTQ), and lysine 225. UTP-binding positions include 189-194 (KTKPTQ) and lysine 225. The 243-residue stretch at 294 to 536 (TIALVGKYVE…IREAIKTRKK (243 aa)) folds into the Glutamine amidotransferase type-1 domain. Residue glycine 356 coordinates L-glutamine. Residue cysteine 383 is the Nucleophile; for glutamine hydrolysis of the active site. Residues 384 to 387 (LGMQ), glutamate 407, and arginine 464 contribute to the L-glutamine site. Residues histidine 509 and glutamate 511 contribute to the active site.

Belongs to the CTP synthase family. Homotetramer.

It carries out the reaction UTP + L-glutamine + ATP + H2O = CTP + L-glutamate + ADP + phosphate + 2 H(+). The catalysed reaction is L-glutamine + H2O = L-glutamate + NH4(+). The enzyme catalyses UTP + NH4(+) + ATP = CTP + ADP + phosphate + 2 H(+). It functions in the pathway pyrimidine metabolism; CTP biosynthesis via de novo pathway; CTP from UDP: step 2/2. With respect to regulation, allosterically activated by GTP, when glutamine is the substrate; GTP has no effect on the reaction when ammonia is the substrate. The allosteric effector GTP functions by stabilizing the protein conformation that binds the tetrahedral intermediate(s) formed during glutamine hydrolysis. Inhibited by the product CTP, via allosteric rather than competitive inhibition. Its function is as follows. Catalyzes the ATP-dependent amination of UTP to CTP with either L-glutamine or ammonia as the source of nitrogen. Regulates intracellular CTP levels through interactions with the four ribonucleotide triphosphates. The polypeptide is CTP synthase (Porphyromonas gingivalis (strain ATCC BAA-308 / W83)).